A 419-amino-acid chain; its full sequence is Elongation factor Tu, chloroplastic (419 aa).

The region spanning 10–214 is the tr-type G domain; it reads KPHVNIGTIG…TVDEHIPTPK (205 aa). Residues 19–26 form a G1 region; the sequence is GHVDHGKT. Residue 19–26 participates in GTP binding; the sequence is GHVDHGKT. Thr-26 lines the Mg(2+) pocket. Positions 60 to 64 are G2; sequence GITIN. Residues 81–84 form a G3 region; it reads DCPG. GTP is bound by residues 81-85 and 136-139; these read DCPGH and NKAD. The tract at residues 136-139 is G4; sequence NKAD. Positions 174–176 are G5; the sequence is SAL.

The protein belongs to the TRAFAC class translation factor GTPase superfamily. Classic translation factor GTPase family. EF-Tu/EF-1A subfamily.

The protein localises to the plastid. The protein resides in the chloroplast. It catalyses the reaction GTP + H2O = GDP + phosphate + H(+). In terms of biological role, GTP hydrolase that promotes the GTP-dependent binding of aminoacyl-tRNA to the A-site of ribosomes during protein biosynthesis. This is Elongation factor Tu, chloroplastic (tufA) from Stigeoclonium helveticum (Green alga).